A 105-amino-acid chain; its full sequence is MKNKIKIRLKSFDHRSLDQATKEIVSAVKRTFATINGPIPLPRKIERFTVNRSPHVHKKSREQFEIRKHKRLLVIDDPNPAVVDALSKVDLAAGVDVVIELESGE.

This sequence belongs to the universal ribosomal protein uS10 family. Part of the 30S ribosomal subunit.

Functionally, involved in the binding of tRNA to the ribosomes. The protein is Small ribosomal subunit protein uS10 of Rickettsia prowazekii (strain Madrid E).